The primary structure comprises 72 residues: Large ribosomal subunit protein uL29 (72 aa).

Belongs to the universal ribosomal protein uL29 family.

The polypeptide is Large ribosomal subunit protein uL29 (Prochlorococcus marinus (strain AS9601)).